The chain runs to 416 residues: Homogentisate 1,2-dioxygenase (416 aa).

Catalysis depends on His-275, which acts as the Proton acceptor. His-318 and Glu-324 together coordinate Fe cation. Residues Tyr-333 and His-354 each coordinate homogentisate. His-354 contacts Fe cation.

It belongs to the homogentisate dioxygenase family. Hexamer; dimer of trimers. It depends on Fe cation as a cofactor.

It catalyses the reaction homogentisate + O2 = 4-maleylacetoacetate + H(+). It functions in the pathway amino-acid degradation; L-phenylalanine degradation; acetoacetate and fumarate from L-phenylalanine: step 4/6. Its function is as follows. Involved in the catabolism of homogentisate (2,5-dihydroxyphenylacetate or 2,5-OH-PhAc), a central intermediate in the degradation of phenylalanine and tyrosine. Catalyzes the oxidative ring cleavage of the aromatic ring of homogentisate to yield maleylacetoacetate. The polypeptide is Homogentisate 1,2-dioxygenase (Legionella pneumophila subsp. pneumophila (strain Philadelphia 1 / ATCC 33152 / DSM 7513)).